Reading from the N-terminus, the 447-residue chain is Hemogen (447 aa).

Residues 1 to 91 (MDLGKDQSLS…EMKVELPSQL (91 aa)) are disordered. Positions 7-86 (QSLSKLHQTP…RQQNTEMKVE (80 aa)) are necessary for nuclear localization. Composition is skewed to basic and acidic residues over residues 14-25 (QTPDHHQEESHV) and 35-49 (RNRE…EAQE). Residues 59-78 (EKKHKRQRTGKRSERGRKRQ) show a composition bias toward basic residues. Phosphoserine is present on residues S89 and S122. Residues 137–156 (QESVTLQENSSEYQATAVQN) are disordered. S200 carries the post-translational modification Phosphoserine. 2 disordered regions span residues 210 to 280 (AKVL…MAVP) and 306 to 337 (AMSK…PGSE). T217 carries the phosphothreonine modification. Residues 306–316 (AMSKDPSHKTT) show a composition bias toward basic and acidic residues.

The protein resides in the nucleus. Its function is as follows. Regulates the proliferation and differentiation of hematopoietic cells. Overexpression block the TPA-induced megakaryocytic differentiation in the K562 cell model. May also prevent cell apoptosis through the activation of the nuclear factor-kappa B (NF-kB). This is Hemogen (HEMGN) from Bos taurus (Bovine).